The primary structure comprises 435 residues: Methionine aminopeptidase 2 (435 aa).

The interval 1–87 (MAAQVADGVA…TQTKPPRVPV (87 aa)) is disordered. Positions 10 to 19 (ADLKLDDTKS) are enriched in basic and acidic residues. Over residues 20–29 (KPTNGTTQNG) the composition is skewed to polar residues. A compositionally biased stretch (acidic residues) spans 32–46 (EHEDSDDDNEGEEGA). Basic residues predominate over residues 55–68 (KKKKKRKPRKKKKA). Position 199 (His199) interacts with substrate. Asp219, Asp230, and His299 together coordinate a divalent metal cation. His307 contributes to the substrate binding site. A divalent metal cation contacts are provided by Glu332 and Glu427.

Belongs to the peptidase M24A family. Methionine aminopeptidase eukaryotic type 2 subfamily. Co(2+) serves as cofactor. Zn(2+) is required as a cofactor. Requires Mn(2+) as cofactor. The cofactor is Fe(2+).

The protein resides in the cytoplasm. It carries out the reaction Release of N-terminal amino acids, preferentially methionine, from peptides and arylamides.. Functionally, cotranslationally removes the N-terminal methionine from nascent proteins. The N-terminal methionine is often cleaved when the second residue in the primary sequence is small and uncharged (Met-Ala-, Cys, Gly, Pro, Ser, Thr, or Val). The polypeptide is Methionine aminopeptidase 2 (Phaeosphaeria nodorum (strain SN15 / ATCC MYA-4574 / FGSC 10173) (Glume blotch fungus)).